The chain runs to 60 residues: Cytotoxin 2a (60 aa).

4 disulfides stabilise this stretch: Cys-3–Cys-21, Cys-14–Cys-38, Cys-42–Cys-53, and Cys-54–Cys-59.

This sequence belongs to the three-finger toxin family. Short-chain subfamily. Type IA cytotoxin sub-subfamily. As to quaternary structure, monomer in solution; Homodimer and oligomer in the presence of negatively charged lipids forming a pore with a size ranging between 20 and 30 Angstroms. As to expression, expressed by the venom gland.

The protein resides in the secreted. It is found in the target cell membrane. Functionally, shows cytolytic activity on many different cells by forming pore in lipid membranes. In vivo, increases heart rate or kills the animal by cardiac arrest. In addition, it binds to heparin with high affinity, interacts with Kv channel-interacting protein 1 (KCNIP1) in a calcium-independent manner, and binds to integrin alpha-V/beta-3 (ITGAV/ITGB3) with moderate affinity. Preferentially binds acidic phospholipids like phosphatidylserine, phosphatidic acid and phosphatidyl glycerol. Has hemolytic activity towards human erythrocytes (EC(50)=1.024 uM) and cytolytic activity towards various cell lines. This chain is Cytotoxin 2a, found in Naja naja (Indian cobra).